The sequence spans 437 residues: Cytochrome c biogenesis protein Ccs1 (437 aa).

Helical transmembrane passes span 23–43 (LQFSIILLLVIASFSVIGTII), 82–102 (TWWFLTLLFIFSLSLLVCSLS), and 168–188 (LAPIFVHASIILLLIGSVLGL).

This sequence belongs to the Ccs1/CcsB family. May interact with CcsA.

The protein localises to the plastid. The protein resides in the chloroplast thylakoid membrane. Required during biogenesis of c-type cytochromes (cytochrome c6 and cytochrome f) at the step of heme attachment. The sequence is that of Cytochrome c biogenesis protein Ccs1 from Porphyra purpurea (Red seaweed).